Reading from the N-terminus, the 290-residue chain is 4-diphosphocytidyl-2-C-methyl-D-erythritol kinase (290 aa).

Residue K12 is part of the active site. 97 to 107 (PVASGIGGGSA) contributes to the ATP binding site. D139 is a catalytic residue.

The protein belongs to the GHMP kinase family. IspE subfamily.

The enzyme catalyses 4-CDP-2-C-methyl-D-erythritol + ATP = 4-CDP-2-C-methyl-D-erythritol 2-phosphate + ADP + H(+). It functions in the pathway isoprenoid biosynthesis; isopentenyl diphosphate biosynthesis via DXP pathway; isopentenyl diphosphate from 1-deoxy-D-xylulose 5-phosphate: step 3/6. Catalyzes the phosphorylation of the position 2 hydroxy group of 4-diphosphocytidyl-2C-methyl-D-erythritol. The sequence is that of 4-diphosphocytidyl-2-C-methyl-D-erythritol kinase from Parvibaculum lavamentivorans (strain DS-1 / DSM 13023 / NCIMB 13966).